Reading from the N-terminus, the 337-residue chain is MAAMAAKLQLSAKSDQSSVRLPRVINLSRDPTTRVSFPRNGSVCSLHTNFSSPHLAKPCAGGGGGGSTGNNGGGSGSGGGGGGFGGSGGEASEESSPWGPIGLFIQGWRSRVAADPQFPFKVLMEEIVGLSACVLGDMASRPNFGLNELDFVFSTLVVGSILNFVLMYMLAPTAATLGSSQTLPGIFRNCPSSHMFEQGSFTVMNRFGTLVYKGMVFASVGLAAGLVGTAISNGLIMLRKKMDPSFETPNKPPPTVLNSLTWATHMGVSANARYQTLNGIEFLLAKVLPPLVFKTSVIVLRCANNVAGGMSFVLLARMTGSQSVEEKTEISEKEKDD.

The N-terminal 59 residues, 1-59, are a transit peptide targeting the chloroplast; the sequence is MAAMAAKLQLSAKSDQSSVRLPRVINLSRDPTTRVSFPRNGSVCSLHTNFSSPHLAKPC. The span at 70-89 shows a compositional bias: gly residues; sequence NNGGGSGSGGGGGGFGGSGG. The disordered stretch occupies residues 70–96; sequence NNGGGSGSGGGGGGFGGSGGEASEESS. 2 helical membrane-spanning segments follow: residues 151–171 and 216–236; these read FVFS…YMLA and VFAS…NGLI.

Belongs to the RETICULATA family. In terms of tissue distribution, expressed in root meristem, root vasculature, distal region of young leaf primordia, leaf bundle sheath cells, hydathodes and pollen grains.

The protein localises to the plastid. It is found in the chloroplast membrane. In terms of biological role, may play a role in leaf development. Required for leaf mesophyll cell division in the early stages of leaf organogenesis. The polypeptide is Protein RETICULATA-RELATED 3, chloroplastic (Arabidopsis thaliana (Mouse-ear cress)).